The following is a 625-amino-acid chain: SWR1-complex protein 3 (625 aa).

Disordered stretches follow at residues 1 to 53 (MPAV…EVGN), 194 to 234 (KELK…KENK), 254 to 273 (KLKEQNKNKQGSPSSSMHDP), and 324 to 434 (NPVN…NAIK). A compositionally biased stretch (basic residues) spans 20 to 31 (SRTRTRSRRGKR). Residues 35–53 (DDDDDDDEESDDAYDEVGN) show a composition bias toward acidic residues. Basic and acidic residues-rich tracts occupy residues 194–214 (KELKRKNDAEAKRLRMEERKR) and 221–234 (IAKEQKLQLQKENK). The segment covering 261–270 (NKQGSPSSSM) has biased composition (polar residues). Over residues 342–352 (KAKDVAEDHRL) the composition is skewed to basic and acidic residues. The segment covering 353 to 364 (NSITLVKSSKTA) has biased composition (polar residues). Composition is skewed to basic and acidic residues over residues 368–388 (PEPKKADDENAEKQQSKEAKT) and 396–420 (DVKKEEEDVKEKGVKSEDTQKKEDN).

The protein belongs to the SWC3 family. Component of the SWR1 chromatin remodeling complex composed of at least ACT1, ARP4, RVB1, RVB2, ARP6, YAF9, VPS71, VPS72, SWC3, SWC4, SWC5, SWC7 and SWR1, and perhaps BDF1.

Its subcellular location is the nucleus. Functionally, component of the SWR1 complex which mediates the ATP-dependent exchange of histone H2A for the H2A variant HZT1 leading to transcriptional regulation of selected genes by chromatin remodeling. Involved in chromosome stability. This chain is SWR1-complex protein 3 (SWC3), found in Saccharomyces cerevisiae (strain ATCC 204508 / S288c) (Baker's yeast).